Here is a 318-residue protein sequence, read N- to C-terminus: tRNA U34 carboxymethyltransferase (318 aa).

Carboxy-S-adenosyl-L-methionine contacts are provided by Lys88, Trp102, Lys107, Gly126, Met192, Tyr196, and Arg311.

The protein belongs to the class I-like SAM-binding methyltransferase superfamily. CmoB family. Homotetramer.

It catalyses the reaction carboxy-S-adenosyl-L-methionine + 5-hydroxyuridine(34) in tRNA = 5-carboxymethoxyuridine(34) in tRNA + S-adenosyl-L-homocysteine + H(+). Catalyzes carboxymethyl transfer from carboxy-S-adenosyl-L-methionine (Cx-SAM) to 5-hydroxyuridine (ho5U) to form 5-carboxymethoxyuridine (cmo5U) at position 34 in tRNAs. This Pseudomonas fluorescens (strain Pf0-1) protein is tRNA U34 carboxymethyltransferase.